We begin with the raw amino-acid sequence, 470 residues long: Calmodulin-binding receptor-like cytoplasmic kinase 1 (470 aa).

Disordered stretches follow at residues 1-29 (MPMRSKTPTPLRFSNGKHQRDDSEYSWTD) and 65-128 (PTEC…SKSW). The span at 65 to 82 (PTECRSDPGESSTHDRES) shows a compositional bias: basic and acidic residues. 2 stretches are compositionally biased toward polar residues: residues 83 to 98 (TLSGWTGYSSPSSFGR) and 108 to 121 (YRFSGSRFQSPGKD). The Protein kinase domain maps to 147–423 (FSSVHQIGEG…MKGIAEKLWA (277 aa)). Residues 153-161 (IGEGGFGTV) and K175 each bind ATP. The interval 162 to 185 (FKGKLDDGTIVAIKRARKNNYGKS) is caM-binding. Catalysis depends on D273, which acts as the Proton acceptor. Residues S277 and S308 each carry the phosphoserine modification. Position 309 is a phosphothreonine (T309). Y322 is subject to Phosphotyrosine.

The protein belongs to the protein kinase superfamily. Ser/Thr protein kinase family. As to quaternary structure, interacts with calmodulin (CaM) in a Ca(2+)-dependent manner. Requires Mg(2+) as cofactor. Post-translationally, autophosphorylated.

Its subcellular location is the cytoplasm. The catalysed reaction is L-seryl-[protein] + ATP = O-phospho-L-seryl-[protein] + ADP + H(+). The enzyme catalyses L-threonyl-[protein] + ATP = O-phospho-L-threonyl-[protein] + ADP + H(+). Its activity is regulated as follows. Up-regulated by Ca(2+)/CaM. This is Calmodulin-binding receptor-like cytoplasmic kinase 1 (CRCK1) from Arabidopsis thaliana (Mouse-ear cress).